A 271-amino-acid chain; its full sequence is Ribosomal RNA small subunit methyltransferase A (271 aa).

N22, L24, G49, E70, D96, and N116 together coordinate S-adenosyl-L-methionine.

The protein belongs to the class I-like SAM-binding methyltransferase superfamily. rRNA adenine N(6)-methyltransferase family. RsmA subfamily.

It is found in the cytoplasm. The catalysed reaction is adenosine(1518)/adenosine(1519) in 16S rRNA + 4 S-adenosyl-L-methionine = N(6)-dimethyladenosine(1518)/N(6)-dimethyladenosine(1519) in 16S rRNA + 4 S-adenosyl-L-homocysteine + 4 H(+). Specifically dimethylates two adjacent adenosines (A1518 and A1519) in the loop of a conserved hairpin near the 3'-end of 16S rRNA in the 30S particle. May play a critical role in biogenesis of 30S subunits. The chain is Ribosomal RNA small subunit methyltransferase A from Sphingopyxis alaskensis (strain DSM 13593 / LMG 18877 / RB2256) (Sphingomonas alaskensis).